A 258-amino-acid chain; its full sequence is UPF0246 protein plu0566 (258 aa).

It belongs to the UPF0246 family.

The chain is UPF0246 protein plu0566 from Photorhabdus laumondii subsp. laumondii (strain DSM 15139 / CIP 105565 / TT01) (Photorhabdus luminescens subsp. laumondii).